Here is a 201-residue protein sequence, read N- to C-terminus: Peptidyl-tRNA hydrolase (201 aa).

Y15 contributes to the tRNA binding site. Residue H20 is the Proton acceptor of the active site. The tRNA site is built by Y66, N68, and N114.

The protein belongs to the PTH family. In terms of assembly, monomer.

The protein localises to the cytoplasm. It carries out the reaction an N-acyl-L-alpha-aminoacyl-tRNA + H2O = an N-acyl-L-amino acid + a tRNA + H(+). Functionally, hydrolyzes ribosome-free peptidyl-tRNAs (with 1 or more amino acids incorporated), which drop off the ribosome during protein synthesis, or as a result of ribosome stalling. Catalyzes the release of premature peptidyl moieties from peptidyl-tRNA molecules trapped in stalled 50S ribosomal subunits, and thus maintains levels of free tRNAs and 50S ribosomes. This Burkholderia mallei (strain ATCC 23344) protein is Peptidyl-tRNA hydrolase.